The primary structure comprises 227 residues: Cytochrome c oxidase subunit 2 (227 aa).

The Mitochondrial intermembrane portion of the chain corresponds to 1 to 14; that stretch reads MAYPLQLGLQDATS. The helical transmembrane segment at 15–45 threads the bilayer; sequence PIMEELMNFHDHTLMIVFLISSLVLYIISLM. The Mitochondrial matrix portion of the chain corresponds to 46-59; it reads LTTKLTHTSTMDAQ. Residues 60–87 traverse the membrane as a helical segment; the sequence is EVETIWTILPAVILIMIALPSLRILYMM. The Mitochondrial intermembrane portion of the chain corresponds to 88–227; the sequence is DEINNPVLTV…HFENWSASMI (140 aa). Cu cation-binding residues include histidine 161, cysteine 196, glutamate 198, cysteine 200, histidine 204, and methionine 207. Mg(2+) is bound at residue glutamate 198.

This sequence belongs to the cytochrome c oxidase subunit 2 family. As to quaternary structure, component of the cytochrome c oxidase (complex IV, CIV), a multisubunit enzyme composed of 14 subunits. The complex is composed of a catalytic core of 3 subunits MT-CO1, MT-CO2 and MT-CO3, encoded in the mitochondrial DNA, and 11 supernumerary subunits COX4I, COX5A, COX5B, COX6A, COX6B, COX6C, COX7A, COX7B, COX7C, COX8 and NDUFA4, which are encoded in the nuclear genome. The complex exists as a monomer or a dimer and forms supercomplexes (SCs) in the inner mitochondrial membrane with NADH-ubiquinone oxidoreductase (complex I, CI) and ubiquinol-cytochrome c oxidoreductase (cytochrome b-c1 complex, complex III, CIII), resulting in different assemblies (supercomplex SCI(1)III(2)IV(1) and megacomplex MCI(2)III(2)IV(2)). Found in a complex with TMEM177, COA6, COX18, COX20, SCO1 and SCO2. Interacts with TMEM177 in a COX20-dependent manner. Interacts with COX20. Interacts with COX16. Requires Cu cation as cofactor.

It is found in the mitochondrion inner membrane. It carries out the reaction 4 Fe(II)-[cytochrome c] + O2 + 8 H(+)(in) = 4 Fe(III)-[cytochrome c] + 2 H2O + 4 H(+)(out). In terms of biological role, component of the cytochrome c oxidase, the last enzyme in the mitochondrial electron transport chain which drives oxidative phosphorylation. The respiratory chain contains 3 multisubunit complexes succinate dehydrogenase (complex II, CII), ubiquinol-cytochrome c oxidoreductase (cytochrome b-c1 complex, complex III, CIII) and cytochrome c oxidase (complex IV, CIV), that cooperate to transfer electrons derived from NADH and succinate to molecular oxygen, creating an electrochemical gradient over the inner membrane that drives transmembrane transport and the ATP synthase. Cytochrome c oxidase is the component of the respiratory chain that catalyzes the reduction of oxygen to water. Electrons originating from reduced cytochrome c in the intermembrane space (IMS) are transferred via the dinuclear copper A center (CU(A)) of subunit 2 and heme A of subunit 1 to the active site in subunit 1, a binuclear center (BNC) formed by heme A3 and copper B (CU(B)). The BNC reduces molecular oxygen to 2 water molecules using 4 electrons from cytochrome c in the IMS and 4 protons from the mitochondrial matrix. The sequence is that of Cytochrome c oxidase subunit 2 (MT-CO2) from Zelotomys hildegardeae (Hildegarde's broad-headed mouse).